The primary structure comprises 389 residues: Elongation factor Tu-3 (389 aa).

The tr-type G domain occupies 10 to 203 (KPHLNIGTMG…AVDTYVPMPE (194 aa)). Residues 19–26 (GHVDHGKT) are G1. 19–26 (GHVDHGKT) serves as a coordination point for GTP. Position 26 (T26) interacts with Mg(2+). Positions 60–64 (GITIN) are G2. The interval 81-84 (DMPG) is G3. Residues 81–85 (DMPGH) and 136–139 (NKAD) each bind GTP. Positions 136–139 (NKAD) are G4. The segment at 173–175 (SGL) is G5.

The protein belongs to the TRAFAC class translation factor GTPase superfamily. Classic translation factor GTPase family. EF-Tu/EF-1A subfamily. Monomer.

It localises to the cytoplasm. It catalyses the reaction GTP + H2O = GDP + phosphate + H(+). GTP hydrolase that promotes the GTP-dependent binding of aminoacyl-tRNA to the A-site of ribosomes during protein biosynthesis. This is Elongation factor Tu-3 from Streptomyces ramocissimus.